Reading from the N-terminus, the 407-residue chain is Probable tRNA sulfurtransferase (407 aa).

The THUMP domain maps to 61–165 (NEITYRLSKI…LDAIYMYEEV (105 aa)). ATP is bound by residues 183–184 (ML), 208–209 (HF), Arg265, Gly287, and Gln296.

It belongs to the ThiI family.

The protein localises to the cytoplasm. The enzyme catalyses [ThiI sulfur-carrier protein]-S-sulfanyl-L-cysteine + a uridine in tRNA + 2 reduced [2Fe-2S]-[ferredoxin] + ATP + H(+) = [ThiI sulfur-carrier protein]-L-cysteine + a 4-thiouridine in tRNA + 2 oxidized [2Fe-2S]-[ferredoxin] + AMP + diphosphate. It catalyses the reaction [ThiS sulfur-carrier protein]-C-terminal Gly-Gly-AMP + S-sulfanyl-L-cysteinyl-[cysteine desulfurase] + AH2 = [ThiS sulfur-carrier protein]-C-terminal-Gly-aminoethanethioate + L-cysteinyl-[cysteine desulfurase] + A + AMP + 2 H(+). It participates in cofactor biosynthesis; thiamine diphosphate biosynthesis. Catalyzes the ATP-dependent transfer of a sulfur to tRNA to produce 4-thiouridine in position 8 of tRNAs, which functions as a near-UV photosensor. Also catalyzes the transfer of sulfur to the sulfur carrier protein ThiS, forming ThiS-thiocarboxylate. This is a step in the synthesis of thiazole, in the thiamine biosynthesis pathway. The sulfur is donated as persulfide by IscS. This is Probable tRNA sulfurtransferase from Staphylococcus aureus (strain NCTC 8325 / PS 47).